A 199-amino-acid polypeptide reads, in one-letter code: Protein ZNRD2 (199 aa).

Residue Ala-2 is modified to N-acetylalanine. Zn(2+)-binding residues include Cys-53, Cys-56, Cys-70, and Cys-73. Residues 93–148 (LSQAREHQLASSTEPASSSRPPSQPPVPRPEHCEGAAAGLKAAQAPPLPAAPPNTD) are disordered. Residue Ser-94 is modified to Phosphoserine. Residues 127–137 (GAAAGLKAAQA) are compositionally biased toward low complexity. Residues 173–194 (SLETSIQLCGLIRACAEALGSL) carry the Nuclear export signal motif.

Homodimer. The cofactor is Zn(2+). Expressed in the early postnatal brain.

It is found in the cytoplasm. In terms of biological role, might play a role in mitosis. Could be a centromere-associated protein. Antigenic molecule. May induce anti-centromere antibodies. This chain is Protein ZNRD2 (Znrd2), found in Mus musculus (Mouse).